A 360-amino-acid polypeptide reads, in one-letter code: Isopentenyl-diphosphate delta-isomerase (360 aa).

Substrate is bound at residue 12–13 (RK). FMN contacts are provided by residues Ser-70, 71-73 (SMT), Ser-101, and Asn-130. A substrate-binding site is contributed by 101–103 (SMR). Gln-165 lines the substrate pocket. Glu-166 is a binding site for Mg(2+). FMN-binding positions include Lys-197, 288–290 (GIR), and 309–310 (AG).

The protein belongs to the IPP isomerase type 2 family. As to quaternary structure, homooctamer. Dimer of tetramers. FMN is required as a cofactor. NADPH serves as cofactor. Requires Mg(2+) as cofactor.

It localises to the cytoplasm. The enzyme catalyses isopentenyl diphosphate = dimethylallyl diphosphate. Involved in the biosynthesis of isoprenoids. Catalyzes the 1,3-allylic rearrangement of the homoallylic substrate isopentenyl (IPP) to its allylic isomer, dimethylallyl diphosphate (DMAPP). The sequence is that of Isopentenyl-diphosphate delta-isomerase from Chlorobium limicola (strain DSM 245 / NBRC 103803 / 6330).